A 391-amino-acid polypeptide reads, in one-letter code: Phosphoglycerate kinase (391 aa).

Residues 21-23 (DLN), R36, 59-62 (HLGR), R113, and R146 contribute to the substrate site. ATP-binding positions include K197, E319, and 345-348 (GGDT).

This sequence belongs to the phosphoglycerate kinase family. As to quaternary structure, monomer.

It is found in the cytoplasm. The catalysed reaction is (2R)-3-phosphoglycerate + ATP = (2R)-3-phospho-glyceroyl phosphate + ADP. It participates in carbohydrate degradation; glycolysis; pyruvate from D-glyceraldehyde 3-phosphate: step 2/5. The polypeptide is Phosphoglycerate kinase (Shewanella baltica (strain OS223)).